Here is a 154-residue protein sequence, read N- to C-terminus: 17 kDa A-type inclusion protein (154 aa).

Residues 17–85 (QKDCSDKLDR…YKRELERDRY (69 aa)) adopt a coiled-coil conformation. The disordered stretch occupies residues 88–154 (SRYLTSSSDP…DVEPEHPPAF (67 aa)).

The protein is 17 kDa A-type inclusion protein of Bos taurus (Bovine).